Consider the following 402-residue polypeptide: Arginine deiminase (402 aa).

Cysteine 391 (amidino-cysteine intermediate) is an active-site residue.

It belongs to the arginine deiminase family.

Its subcellular location is the cytoplasm. The enzyme catalyses L-arginine + H2O = L-citrulline + NH4(+). Its pathway is amino-acid degradation; L-arginine degradation via ADI pathway; carbamoyl phosphate from L-arginine: step 1/2. In Mycobacterium marinum (strain ATCC BAA-535 / M), this protein is Arginine deiminase.